The primary structure comprises 508 residues: DNA-directed RNA polymerase subunit alpha (508 aa).

The interval 1–380 is alpha N-terminal domain (alpha-NTD); the sequence is MKHILLSCVE…HLFSPFLQTH (380 aa). The alpha C-terminal domain (alpha-CTD) stretch occupies residues 434 to 508; sequence NLVTAIQTLD…LKNFGVLPTS (75 aa).

Belongs to the RNA polymerase alpha chain family. In plastids the minimal PEP RNA polymerase catalytic core is composed of four subunits: alpha, beta, beta', and beta''. When a (nuclear-encoded) sigma factor is associated with the core the holoenzyme is formed, which can initiate transcription.

Its subcellular location is the plastid. It localises to the chloroplast. The enzyme catalyses RNA(n) + a ribonucleoside 5'-triphosphate = RNA(n+1) + diphosphate. Functionally, DNA-dependent RNA polymerase catalyzes the transcription of DNA into RNA using the four ribonucleoside triphosphates as substrates. The protein is DNA-directed RNA polymerase subunit alpha (rpoA) of Oltmannsiellopsis viridis (Marine flagellate).